Consider the following 498-residue polypeptide: L-ornithine N(5)-monooxygenase (498 aa).

Residues 80-88 (ERQKQFAWH) and Gln-99 contribute to the FAD site. Residue Lys-104 coordinates substrate. Residue Val-165 coordinates FAD. Residues 251–254 (SGQS) and Arg-276 contribute to the NADP(+) site. Substrate contacts are provided by residues 290-293 (NEVF) and Asn-320. 320 to 322 (NYS) lines the NADP(+) pocket. Residue 463–465 (SLL) participates in FAD binding. A substrate-binding site is contributed by Ser-466.

This sequence belongs to the lysine N(6)-hydroxylase/L-ornithine N(5)-oxygenase family. In terms of assembly, homotetramer. It depends on FAD as a cofactor.

The catalysed reaction is L-ornithine + NADPH + O2 = N(5)-hydroxy-L-ornithine + NADP(+) + H2O. The enzyme catalyses L-ornithine + NADH + O2 = N(5)-hydroxy-L-ornithine + NAD(+) + H2O. It functions in the pathway siderophore biosynthesis. Functionally, catalyzes the conversion of L-ornithine to N(5)-hydroxyornithine, the first step in the biosynthesis of all hydroxamate-containing siderophores, such as the secreted triacetylfusarinine C (TAFC) involved in iron uptake and the intracellular iron storage compound desferriferricrocin (DFFC). In Emericella nidulans (strain FGSC A4 / ATCC 38163 / CBS 112.46 / NRRL 194 / M139) (Aspergillus nidulans), this protein is L-ornithine N(5)-monooxygenase.